The sequence spans 620 residues: DNA mismatch repair protein MutL (620 aa).

The protein belongs to the DNA mismatch repair MutL/HexB family.

In terms of biological role, this protein is involved in the repair of mismatches in DNA. It is required for dam-dependent methyl-directed DNA mismatch repair. May act as a 'molecular matchmaker', a protein that promotes the formation of a stable complex between two or more DNA-binding proteins in an ATP-dependent manner without itself being part of a final effector complex. The polypeptide is DNA mismatch repair protein MutL (Clostridium tetani (strain Massachusetts / E88)).